The following is a 230-amino-acid chain: MSQEQLVAVNELNENLGKVLIKIARDSIANKLGILKINLEDYLSSLNDPILNKKGLAFVTLETYYGNSTSLRGCIGYVEAVAPLKEIVSKAAIAAAFSDPRFPPLSKGEFDNIIIEVTVLTKPQEIDVENRWELPKKIKVGEDGLIVEYGILYSGLLLPQVPMEYCWDEETFLAETCIKAGLEPDCWLNNKVKIKKFQGIIFREEKPKSEKILIIKPSEVKCKKEEISLL.

Residues 15 to 213 enclose the AMMECR1 domain; sequence NLGKVLIKIA…EEKPKSEKIL (199 aa).

This chain is Protein STK_02290, found in Sulfurisphaera tokodaii (strain DSM 16993 / JCM 10545 / NBRC 100140 / 7) (Sulfolobus tokodaii).